A 362-amino-acid polypeptide reads, in one-letter code: Apelin receptor A (362 aa).

The Extracellular portion of the chain corresponds to M1–L34. N-linked (GlcNAc...) asparagine glycosylation occurs at N19. 2 cysteine pairs are disulfide-bonded: C23-C286 and C105-C184. A helical transmembrane segment spans residues I35 to F55. The Cytoplasmic portion of the chain corresponds to T56–N73. Residues L74–L94 form a helical membrane-spanning segment. Over G95 to K106 the chain is Extracellular. The chain crosses the membrane as a helical span at residues I107–S127. At F128–M149 the chain is on the cytoplasmic side. A helical membrane pass occupies residues L150–F170. At R171–A211 the chain is on the extracellular side. N180 carries an N-linked (GlcNAc...) asparagine glycan. Residues L212 to V232 traverse the membrane as a helical segment. At T233–R248 the chain is on the cytoplasmic side. A helical transmembrane segment spans residues L249 to V269. At L270 to N284 the chain is on the extracellular side. The helical transmembrane segment at S285–V305 threads the bilayer. Residues N306–V362 lie on the Cytoplasmic side of the membrane.

This sequence belongs to the G-protein coupled receptor 1 family. In terms of tissue distribution, first expressed before epiboly in dorsal precursors. During epiboly, expressed in the enveloping layer, yolk syncytial layer and migrating mesendoderm. During segmentation stages, expressed in epithelial structures such as adaxial cells, border cells of the newly formed somites, developing lens, otic vesicles and venous vasculature.

It localises to the cell membrane. G protein-coupled receptor for peptide hormones apelin (apln) and apelin receptor early endogenous ligand (apela), that plays a role in the regulation of normal cardiovascular function and fluid homeostasis. When acting as apelin receptor, activates both G(i) protein pathway that inhibits adenylate cyclase activity, and the beta-arrestin pathway that promotes internalization of the receptor. Also functions as mechanoreceptor that is activated by pathological stimuli in a G-protein-independent fashion to induce beta-arrestin signaling, hence eliciting cardiac hypertrophy. However, the presence of apelin ligand blunts cardiac hypertrophic induction from APLNR/APJ on response to pathological stimuli. Plays a key role in early development such as gastrulation, blood vessels formation and heart morphogenesis by acting as a receptor for apela hormone, promoting endoderm and mesendoderm cell migration and regulating the migration of cells fated to become myocardial progenitors, respectively. Positively regulates angioblast migration toward the embryonic midline, i.e. the position of the future vessel formation, during vasculogenesis. May promote sinus venosus (SV)-derived endothelial cells migration into the developing heart to promote coronary blood vessel development. Required for cardiovascular development, particularly for intersomitic vein angiogenesis by acting as a receptor for apln hormone. Also plays a role in various processes in adults such as regulation of blood vessel formation, blood pressure, heart contractility, and heart failure. Acts redundantly with agtrl1b in heart development. This chain is Apelin receptor A (aplnra), found in Danio rerio (Zebrafish).